Reading from the N-terminus, the 313-residue chain is Calcium homeostasis modulator protein 6 (313 aa).

Residues 1–21 lie on the Cytoplasmic side of the membrane; the sequence is MEKFKAVLDLQRKHRNALGYS. Residues 22-37 form a helical membrane-spanning segment; the sequence is LVTLLTAGGEKIFSSV. The Extracellular segment spans residues 38-46; that stretch reads VFQCPCTAT. 3 disulfide bridges follow: Cys41-Cys125, Cys43-Cys154, and Cys138-Cys145. Residues 47–68 form a helical membrane-spanning segment; it reads WNLPYGLVFLLVPALALFLLGY. At 69 to 101 the chain is on the cytoplasmic side; it reads ALSARTWRLLTGCCSRSARFSSGLRSAFVCAQL. The helical transmembrane segment at 102-126 threads the bilayer; sequence SMTAAFAPLTWVAVALLEGSFYQCA. The Extracellular segment spans residues 127-167; the sequence is VSGSARLAPYLCKGRDPNCNATLPQAPCNKQKVEMQEILSQ. A helical transmembrane segment spans residues 168-190; it reads LKAQSQVFGWILIAAVIILLLLV. Topologically, residues 191 to 313 are cytoplasmic; the sequence is KSVTRCFSPV…DMSMTNTHEL (123 aa).

Belongs to the CALHM family. In terms of assembly, oligomerizes to form decameric and undecameric channels. Post-translationally, N-glycosylated. As to expression, immune cells in primary and secondary lymphoid organs.

The protein resides in the cell membrane. It catalyses the reaction ATP(in) = ATP(out). Inhibited by Gd(3+). Partially inhibited by divalent ions Ca(2+) and Ba(2+). In terms of biological role, pore-forming subunit of an ATP-permeable channel. In response to pathogen-derived and proinflammatory stimuli, relocates from intracellular compartments to NK-dendritic cell and NK-macrophage immune synapses where it mediates ATP efflux and NK cell activation involved in antimicrobial and antitumor responses. May assemble to form gap junction channel-like structures with gating and ion conductance likely regulated by membrane lipids and voltage rather than by extracellular calcium levels. The protein is Calcium homeostasis modulator protein 6 of Mus musculus (Mouse).